A 255-amino-acid chain; its full sequence is uncharacterized protein (255 aa).

In terms of domain architecture, J spans 4 to 72 (DPYSVLGVEK…KRRKHYDKTG (69 aa)). Basic residues-rich tracts occupy residues 167–178 (FAPNEKKRKRRA) and 243–255 (TKPK…RSKE). 2 disordered regions span residues 167–215 (FAPN…EEAL) and 230–255 (LISN…RSKE).

The protein belongs to the DnaJ family.

The protein resides in the nucleus. The protein localises to the nucleolus. This is an uncharacterized protein from Schizosaccharomyces pombe (strain 972 / ATCC 24843) (Fission yeast).